The chain runs to 376 residues: Alanine racemase (376 aa).

Lys40 functions as the Proton acceptor; specific for D-alanine in the catalytic mechanism. Lys40 carries the post-translational modification N6-(pyridoxal phosphate)lysine. Arg138 contacts substrate. Tyr270 functions as the Proton acceptor; specific for L-alanine in the catalytic mechanism. Residue Met317 coordinates substrate.

The protein belongs to the alanine racemase family. Pyridoxal 5'-phosphate is required as a cofactor.

It carries out the reaction L-alanine = D-alanine. Its pathway is amino-acid biosynthesis; D-alanine biosynthesis; D-alanine from L-alanine: step 1/1. Functionally, catalyzes the interconversion of L-alanine and D-alanine. May also act on other amino acids. The sequence is that of Alanine racemase (alr) from Lactobacillus gasseri (strain ATCC 33323 / DSM 20243 / BCRC 14619 / CIP 102991 / JCM 1131 / KCTC 3163 / NCIMB 11718 / NCTC 13722 / AM63).